The sequence spans 858 residues: Taste receptor type 1 member 3 (858 aa).

The first 20 residues, 1–20 (MPALAIMGLSLAAFLELGMG), serve as a signal peptide directing secretion. The Extracellular portion of the chain corresponds to 21 to 572 (ASLCLSQQFK…RPKFLAWGEP (552 aa)). The N-linked (GlcNAc...) asparagine; when associated with variant T-60 glycan is linked to N58. 9 N-linked (GlcNAc...) asparagine glycosylation sites follow: N85, N130, N203, N264, N379, N387, N418, N439, and N482. The helical transmembrane segment at 573–593 (VVLSLLLLLCLVLGLALAALG) threads the bilayer. The Cytoplasmic segment spans residues 594 to 610 (LSVHHWDSPLVQASGGS). A helical membrane pass occupies residues 611–631 (QFCFGLICLGLFCLSVLLFPG). Topologically, residues 632–644 (RPSSASCLAQQPM) are extracellular. Residues 645–665 (AHLPLTGCLSTLFLQAAETFV) traverse the membrane as a helical segment. Over 666–687 (ESELPLSWANWLCSYLRGLWAW) the chain is Cytoplasmic. Residues 688-708 (LVVLLATFVEAALCAWYLIAF) traverse the membrane as a helical segment. The Extracellular segment spans residues 709–735 (PPEVVTDWSVLPTEVLEHCHVRSWVSL). Residues 736–756 (GLVHITNAMLAFLCFLGTFLV) traverse the membrane as a helical segment. Topologically, residues 757–767 (QSQPGRYNRAR) are cytoplasmic. A helical membrane pass occupies residues 768–788 (GLTFAMLAYFITWVSFVPLLA). The Extracellular portion of the chain corresponds to 789–796 (NVQVAYQP). A helical transmembrane segment spans residues 797 to 817 (AVQMGAILVCALGILVTFHLP). Residues 818–858 (KCYVLLWLPKLNTQEFFLGRNAKKAADENSGGGEAAQGHNE) lie on the Cytoplasmic side of the membrane.

It belongs to the G-protein coupled receptor 3 family. TAS1R subfamily. As to quaternary structure, forms homodimers or heterodimers with TAS1R1 and TAS1R2. The Thr-60 variant is predicted to introduce a novel N-linked glycosylation site at Asn-58. The addition of even a short carbohydrate group at Asn-58 is predicted to disrupt one of the contact surfaces required for stability of a dimer. Therefore a Thr-60 variant N-glycosylated at Asn-58 is predicted to be precluded from forming homodimers or heterodimers. As to expression, expressed in circumvallate, foliate and fungiform taste papillae as well as in taste buds on the palate. Also expressed in testis. Not expressed in brain, heart, kidney, liver or spleen. The topographic distribution in various taste papillae is different from those of other T1R members.

It is found in the cell membrane. Functionally, putative taste receptor. TAS1R1/TAS1R3 responds to the umami taste stimulus (the taste of monosodium glutamate) and also to most of the 20 standard L-amino acids, but not to their D-enantiomers or other compounds. TAS1R2/TAS1R3 recognizes diverse natural and synthetic sweeteners. TAS1R3 is essential for the recognition and response to the disaccharide trehalose. Sequence differences within and between species can significantly influence the selectivity and specificity of taste responses. This Mus musculus (Mouse) protein is Taste receptor type 1 member 3 (Tas1r3).